Consider the following 302-residue polypeptide: Late embryogenesis abundant protein D-29 (302 aa).

Disordered stretches follow at residues 25–93 (HMPS…AKEY), 168–193 (VKNAAKGKSSEMRQATTEKARELADS), and 205–302 (AKEK…NHKN). 2 stretches are compositionally biased toward basic and acidic residues: residues 34 to 70 (RDYSKLKTKTEEATDEHHSRTQQAKDELKSKADHAAN) and 79 to 93 (AKDRASEVGKEAKEY). The segment covering 205-286 (AKEKVRDMAD…KAEETIESAK (82 aa)) has biased composition (basic and acidic residues).

Belongs to the LEA type 1 family.

Functionally, LEA protein are late embryonic proteins abundant in higher plant seed embryos. There are two subsets of LEA proteins (5a and 5b), the first ones are expressed when the cotyledon weight reach 80 mg and the second set are expressed above 100 mg. The function of those proteins is not known. In Gossypium hirsutum (Upland cotton), this protein is Late embryogenesis abundant protein D-29.